The sequence spans 392 residues: Glucan endo-1,3-beta-glucosidase 14 (392 aa).

The first 21 residues, 1-21, serve as a signal peptide directing secretion; the sequence is MATHSLSFFFRVLLLLFLTLS. N-linked (GlcNAc...) asparagine glycosylation is found at N54 and N89. The Proton donor role is filled by E122. Residue E267 is the Nucleophile of the active site. S359 carries the GPI-anchor amidated serine lipid modification. Positions 360-392 are cleaved as a propeptide — removed in mature form; it reads RATTIKILNLWRVVMGLAVAWFILDMGDKMRMR.

The protein belongs to the glycosyl hydrolase 17 family.

The protein localises to the cell membrane. It localises to the secreted. Its subcellular location is the cell wall. It is found in the cytoplasm. It carries out the reaction Hydrolysis of (1-&gt;3)-beta-D-glucosidic linkages in (1-&gt;3)-beta-D-glucans.. The polypeptide is Glucan endo-1,3-beta-glucosidase 14 (Arabidopsis thaliana (Mouse-ear cress)).